Consider the following 100-residue polypeptide: Small ribosomal subunit protein uS14 (100 aa).

Belongs to the universal ribosomal protein uS14 family. As to quaternary structure, part of the 30S ribosomal subunit. Contacts proteins S3 and S10.

Binds 16S rRNA, required for the assembly of 30S particles and may also be responsible for determining the conformation of the 16S rRNA at the A site. The chain is Small ribosomal subunit protein uS14 from Gloeothece citriformis (strain PCC 7424) (Cyanothece sp. (strain PCC 7424)).